Consider the following 344-residue polypeptide: Beta-hexosaminidase (344 aa).

Residues D60, R68, R132, and 162–163 contribute to the substrate site; that span reads KH. H175 acts as the Proton donor/acceptor in catalysis. D247 (nucleophile) is an active-site residue.

Belongs to the glycosyl hydrolase 3 family. NagZ subfamily.

Its subcellular location is the cytoplasm. It carries out the reaction Hydrolysis of terminal non-reducing N-acetyl-D-hexosamine residues in N-acetyl-beta-D-hexosaminides.. Its pathway is cell wall biogenesis; peptidoglycan recycling. In terms of biological role, plays a role in peptidoglycan recycling by cleaving the terminal beta-1,4-linked N-acetylglucosamine (GlcNAc) from peptide-linked peptidoglycan fragments, giving rise to free GlcNAc, anhydro-N-acetylmuramic acid and anhydro-N-acetylmuramic acid-linked peptides. The chain is Beta-hexosaminidase from Haemophilus ducreyi (strain 35000HP / ATCC 700724).